The sequence spans 1037 residues: Presequence protease, mitochondrial (1037 aa).

The transit peptide at 1-15 directs the protein to the mitochondrion; the sequence is MWRCGGRQGLGVLRR. A Zn(2+)-binding site is contributed by His104. Glu107 (proton acceptor) is an active-site residue. 2 residues coordinate Zn(2+): His108 and Glu205. A disulfide bridge links Cys119 with Cys556. An N6-acetyllysine modification is found at Lys759. An N6-acetyllysine; alternate modification is found at Lys770. Lys770 is subject to N6-succinyllysine; alternate. A disordered region spans residues 803–834; that stretch reads IGRSKKERRPVRPHTVEKPVPSSSGGDAHVPH. The segment covering 804–814 has biased composition (basic residues); it reads GRSKKERRPVR. Lys849 carries the post-translational modification N6-succinyllysine. Lys884 carries the N6-acetyllysine modification. Position 946 is an N6-succinyllysine (Lys946).

Belongs to the peptidase M16 family. PreP subfamily. As to quaternary structure, monomer and homodimer; homodimerization is induced by binding of the substrate. Zn(2+) is required as a cofactor. Post-translationally, a disulfide bond locks the enzyme in the closed conformation preventing substrate entry into the catalytic chamber.

The protein resides in the mitochondrion matrix. Its activity is regulated as follows. Mainly exists in a closed and catalytically competent conformation but a closed-to-open switch allows substrate entry into the catalytic chamber. Substrate binding induces closure and dimerization. A disulfide bond may lock the enzyme in a closed conformation preventing substrate entry into the catalytic chamber, participating in redox regulation of the enzyme. Inhibited by metal-chelating agents. Inhibited by nickel and zinc excess, and slightly activated by manganese. Its function is as follows. Metalloendopeptidase of the mitochondrial matrix that functions in peptide cleavage and degradation rather than in protein processing. Has an ATP-independent activity. Specifically cleaves peptides in the range of 5 to 65 residues. Shows a preference for cleavage after small polar residues and before basic residues, but without any positional preference. Degrades the transit peptides of mitochondrial proteins after their cleavage. Also degrades other unstructured peptides. It is also able to degrade amyloid-beta protein 40, one of the peptides produced by APP processing, when it accumulates in mitochondrion. It is a highly efficient protease, at least toward amyloid-beta protein 40. Cleaves that peptide at a specific position and is probably not processive, releasing digested peptides intermediates that can be further cleaved subsequently. It is also able to degrade amyloid-beta protein 42. This is Presequence protease, mitochondrial from Pongo abelii (Sumatran orangutan).